Consider the following 644-residue polypeptide: DNA mismatch repair protein MutL (644 aa).

Positions 336-400 (ERPFEPSSPQ…EISRDSSLGE (65 aa)) are disordered. Positions 373-400 (SKTHSTWDEASRVDTSRAEISRDSSLGE) are enriched in basic and acidic residues.

It belongs to the DNA mismatch repair MutL/HexB family.

Its function is as follows. This protein is involved in the repair of mismatches in DNA. It is required for dam-dependent methyl-directed DNA mismatch repair. May act as a 'molecular matchmaker', a protein that promotes the formation of a stable complex between two or more DNA-binding proteins in an ATP-dependent manner without itself being part of a final effector complex. The sequence is that of DNA mismatch repair protein MutL from Shewanella sp. (strain MR-7).